The sequence spans 165 residues: Choriogonadotropin subunit beta (165 aa).

A signal peptide spans 1-20; that stretch reads METLQGLLLWLLLSMGGAQA. 6 cysteine pairs are disulfide-bonded: C29/C77, C43/C92, C46/C130, C54/C108, C58/C110, and C113/C120. N-linked (GlcNAc...) asparagine glycans are attached at residues N33 and N50. Residues 131-165 form a disordered region; that stretch reads DDPNLQASSSSKDPPPSPPSPSRLLEPAGTPFLPQ. O-linked (GalNAc...) serine glycosylation is found at S141, S147, and S152.

The protein belongs to the glycoprotein hormones subunit beta family. As to quaternary structure, heterodimer of a common alpha chain and a unique beta chain which confers biological specificity to thyrotropin, lutropin, follitropin and gonadotropin. As to expression, placenta.

Its subcellular location is the secreted. In terms of biological role, stimulates the ovaries to synthesize the steroids that are essential for the maintenance of pregnancy. This Papio anubis (Olive baboon) protein is Choriogonadotropin subunit beta (CGB).